The primary structure comprises 133 residues: Fatty acid-binding protein, heart (133 aa).

At valine 2 the chain carries N-acetylvaline. Phosphothreonine is present on threonine 8. Tyrosine 20 carries the phosphotyrosine; by Tyr-kinases modification. Serine 23 bears the Phosphoserine mark. Threonine 30 carries the phosphothreonine modification. Phosphoserine is present on serine 83. 127–129 (RTY) lines the (9Z)-octadecenoate pocket. 127–129 (RTY) contributes to the hexadecanoate binding site. 127 to 129 (RTY) contributes to the octadecanoate binding site.

It belongs to the calycin superfamily. Fatty-acid binding protein (FABP) family.

The protein resides in the cytoplasm. Its function is as follows. FABPs are thought to play a role in the intracellular transport of long-chain fatty acids and their acyl-CoA esters. In Homo sapiens (Human), this protein is Fatty acid-binding protein, heart (FABP3).